Reading from the N-terminus, the 550-residue chain is Probable importin subunit alpha-A (550 aa).

Residues 1–30 are compositionally biased toward basic and acidic residues; the sequence is MSSRDKQDSRKKEFKKSLDSETARRKREEN. The tract at residues 1-34 is disordered; it reads MSSRDKQDSRKKEFKKSLDSETARRKREENSIGI. Residues 1-56 form the IBB domain; that stretch reads MSSRDKQDSRKKEFKKSLDSETARRKREENSIGIRKNAREELMLKRRGIVQPNPST. ARM repeat units lie at residues 116 to 155, 158 to 198, 201 to 241, 256 to 297, 300 to 339, 342 to 381, 385 to 424, and 428 to 467; these read YPPIDQVIECGIIPKLNQLLQCNNPKVQFESAWALTNIAS, NRQT…NIAG, VDSR…KIGL, KPQP…YLCD, NTKIQAVIDSGVVPRLVKLLEYPDSIVFTPALRAVGNIVT, SSQTQIVIDNNGVELITRLLAVQKKSIRKESCWALSNITA, SQIDVVVSNPKTVTTLISLLSHSEHDIKREACWALSNSTN, and TKSIQTLVRHNILKHFIDLLNSQDLVILKIVLEGLINIIK.

Belongs to the importin alpha family. In terms of assembly, forms a complex with tnpo/importin subunit beta.

The protein localises to the cytoplasm. Its subcellular location is the nucleus envelope. In terms of biological role, functions in nuclear protein import via a substrate-importin alpha-beta transport complex that passes though the nuclear pore complexes (NPC). Binds specifically and directly to substrates containing either a simple or bipartite NLS motif. This Dictyostelium discoideum (Social amoeba) protein is Probable importin subunit alpha-A.